Here is a 121-residue protein sequence, read N- to C-terminus: Ribonuclease P protein component (121 aa).

The protein belongs to the RnpA family. As to quaternary structure, consists of a catalytic RNA component (M1 or rnpB) and a protein subunit.

It carries out the reaction Endonucleolytic cleavage of RNA, removing 5'-extranucleotides from tRNA precursor.. RNaseP catalyzes the removal of the 5'-leader sequence from pre-tRNA to produce the mature 5'-terminus. It can also cleave other RNA substrates such as 4.5S RNA. The protein component plays an auxiliary but essential role in vivo by binding to the 5'-leader sequence and broadening the substrate specificity of the ribozyme. This chain is Ribonuclease P protein component, found in Rickettsia prowazekii (strain Madrid E).